Here is a 333-residue protein sequence, read N- to C-terminus: Probable G-protein coupled receptor 33 (333 aa).

Residues 1-30 (MDLINSTDYLINASTLVRNSTQFLAPASKM) lie on the Extracellular side of the membrane. 3 N-linked (GlcNAc...) asparagine glycosylation sites follow: asparagine 5, asparagine 12, and asparagine 19. A helical membrane pass occupies residues 31–53 (IIALSLYISSIIGTITNGLYLWV). At 54-64 (LRFKMKQTVNT) the chain is on the cytoplasmic side. The chain crosses the membrane as a helical span at residues 65–86 (LLFFHLILSYFISTMILPFMAT). Topologically, residues 87 to 103 (SQLQDNHWNFGTALCKV) are extracellular. An intrachain disulfide couples cysteine 101 to cysteine 179. Residues 104–124 (FNGTLSLGMFTSVFFLSAIGL) form a helical membrane-spanning segment. At 125–143 (DRYLLTLHPVWSQQHRTPR) the chain is on the cytoplasmic side. A helical transmembrane segment spans residues 144-165 (WASSIVLGVWISAAALSIPYLI). Topologically, residues 166–209 (FRQTHHDRKGKVTCQNNYAVSTNWESKEMQALRQWIHVACFISR) are extracellular. The helical transmembrane segment at 210 to 230 (FLLGFLLPFFIIIFCYERVAS) threads the bilayer. Residues 231–246 (KVKERSLFKSSKPFKV) lie on the Cytoplasmic side of the membrane. A helical membrane pass occupies residues 247–268 (MMTAIISFFVCWMPYHIHQGLL). Topologically, residues 269 to 283 (LTTNQSLLLELTLIL) are extracellular. The N-linked (GlcNAc...) asparagine glycan is linked to asparagine 272. A helical membrane pass occupies residues 284–303 (TVLTTSFNTIFSPTLYLFVG). At 304–333 (ENFKKVFKKSILALFESTFSEDSSVERTQT) the chain is on the cytoplasmic side.

The protein belongs to the G-protein coupled receptor 1 family.

The protein localises to the cell membrane. In terms of biological role, orphan receptor; could be a chemoattractant receptor. This is Probable G-protein coupled receptor 33 (GPR33) from Pan troglodytes (Chimpanzee).